The sequence spans 189 residues: Dual specificity phosphatase 21 (189 aa).

Residues 20–161 (GLSQITASLF…LIHYEFKLFS (142 aa)) enclose the Tyrosine-protein phosphatase domain. The tract at residues 43 to 128 (SNNHITTIIN…YLMKYHNMTL (86 aa)) is sufficient for mitochondrial localization. Cysteine 105 serves as the catalytic Phosphocysteine intermediate.

The protein belongs to the protein-tyrosine phosphatase family. Non-receptor class dual specificity subfamily. Microtubule inner protein component of sperm flagellar doublet microtubules. Selectively expressed in testis.

Its subcellular location is the cytoplasm. The protein localises to the nucleus. It localises to the mitochondrion inner membrane. The protein resides in the cytoskeleton. It is found in the flagellum axoneme. The enzyme catalyses O-phospho-L-tyrosyl-[protein] + H2O = L-tyrosyl-[protein] + phosphate. It catalyses the reaction O-phospho-L-seryl-[protein] + H2O = L-seryl-[protein] + phosphate. The catalysed reaction is O-phospho-L-threonyl-[protein] + H2O = L-threonyl-[protein] + phosphate. Protein phosphatase component of the sperm flagellar doublet microtubules. May act as a regulator of sperm motility by mediating dephosphorylation of sperm doublet microtubule proteins. Can dephosphorylate single and diphosphorylated synthetic MAPK peptides, with preference for the phosphotyrosine and diphosphorylated forms over phosphothreonine. This Mus musculus (Mouse) protein is Dual specificity phosphatase 21.